The sequence spans 416 residues: MSICTSYDIELWKIIQQETIRQEEHIELIASENYVSTQVMKAQGSQLTNKYAEGYPGKRYYGGCEYVDMIEQLGINRAKELFSADYANIQPHSGSQANFSVYNALLHPGDTILSMHLNHGGHLTHGSQVNFSGKLYNAVFYGVDENGCINYEKVHHLAVKHRPKMIVGGFSAYSGIINWSNLRQIADAVQAYLFIDMAHITGLVAAGIYPNPLPHAHVVTATTHKTLAGPRGGLILASGGNDALYKKLDASVFPGSQGGPLMHVIAAKAIALKEAMDPSFKVYQQKIVQNAKIMVKEFALREFKIISGMTHNHLFLLDLRDKNITGKDASTALERANIIVNKNSIPNDFRSPFITSGIRIGTPAITRRNFNENDVRKLSHWICDILNHIDNNEIIFSIKNKVLRICSQYPIYNKSY.

(6S)-5,6,7,8-tetrahydrofolate is bound by residues Leu-117 and 121 to 123; that span reads GHL. Lys-225 bears the N6-(pyridoxal phosphate)lysine mark. 351 to 353 lines the (6S)-5,6,7,8-tetrahydrofolate pocket; that stretch reads SPF.

This sequence belongs to the SHMT family. In terms of assembly, homodimer. Pyridoxal 5'-phosphate is required as a cofactor.

The protein resides in the cytoplasm. It carries out the reaction (6R)-5,10-methylene-5,6,7,8-tetrahydrofolate + glycine + H2O = (6S)-5,6,7,8-tetrahydrofolate + L-serine. Its pathway is one-carbon metabolism; tetrahydrofolate interconversion. The protein operates within amino-acid biosynthesis; glycine biosynthesis; glycine from L-serine: step 1/1. Its function is as follows. Catalyzes the reversible interconversion of serine and glycine with tetrahydrofolate (THF) serving as the one-carbon carrier. This reaction serves as the major source of one-carbon groups required for the biosynthesis of purines, thymidylate, methionine, and other important biomolecules. Also exhibits THF-independent aldolase activity toward beta-hydroxyamino acids, producing glycine and aldehydes, via a retro-aldol mechanism. The polypeptide is Serine hydroxymethyltransferase (Blochmanniella pennsylvanica (strain BPEN)).